Consider the following 89-residue polypeptide: UPF0335 protein OCAR_5086/OCA5_c28780 (89 aa).

This sequence belongs to the UPF0335 family.

The polypeptide is UPF0335 protein OCAR_5086/OCA5_c28780 (Afipia carboxidovorans (strain ATCC 49405 / DSM 1227 / KCTC 32145 / OM5) (Oligotropha carboxidovorans)).